Consider the following 84-residue polypeptide: Protein Tlp homolog (84 aa).

Residues 1 to 20 (MGKEERYTKKPKPDDRSDNV) are disordered.

The protein belongs to the Tlp family.

This is Protein Tlp homolog from Caldanaerobacter subterraneus subsp. tengcongensis (strain DSM 15242 / JCM 11007 / NBRC 100824 / MB4) (Thermoanaerobacter tengcongensis).